The primary structure comprises 303 residues: MTASNKQAVKAYLLNLQDKICQVLAAVDGKETFVEDSWQRPEGGGGRSRVLTNGAVIEKGGVNFSHVHGSSMPASATAHRPELAGRSFEAMGVSLVIHPNNPHVPTSHANVRFFIAEKEGAEPVWWFGGGYDLTPYYGNDEDCRHWHNTAKAACAPFGEDKYPRYKKWCDEYFYLKHRDEPRGVGGLFFDDLNELGFDQSFAFMQAVGDSYTQAYVPIVERRKDEPYNQAQRDFQLYRRGRYVEFNLVYDRGTLFGLQTGGRTESILMSLPPLVRWEYDWQPQPNTPEARLYEHYLQPQDWAE.

Residue Ser94 coordinates substrate. 2 residues coordinate a divalent metal cation: His98 and His108. Residue His108 is the Proton donor of the active site. 110-112 contributes to the substrate binding site; sequence NVR. Residues His147 and His177 each contribute to the a divalent metal cation site. Residues 242-277 form an important for dimerization region; it reads YVEFNLVYDRGTLFGLQTGGRTESILMSLPPLVRWE. 260–262 provides a ligand contact to substrate; it reads GGR.

The protein belongs to the aerobic coproporphyrinogen-III oxidase family. As to quaternary structure, homodimer. Requires a divalent metal cation as cofactor.

It localises to the cytoplasm. The enzyme catalyses coproporphyrinogen III + O2 + 2 H(+) = protoporphyrinogen IX + 2 CO2 + 2 H2O. It functions in the pathway porphyrin-containing compound metabolism; protoporphyrin-IX biosynthesis; protoporphyrinogen-IX from coproporphyrinogen-III (O2 route): step 1/1. Its function is as follows. Involved in the heme biosynthesis. Catalyzes the aerobic oxidative decarboxylation of propionate groups of rings A and B of coproporphyrinogen-III to yield the vinyl groups in protoporphyrinogen-IX. The sequence is that of Oxygen-dependent coproporphyrinogen-III oxidase from Saccharophagus degradans (strain 2-40 / ATCC 43961 / DSM 17024).